Reading from the N-terminus, the 104-residue chain is Iron-sulfur cluster assembly protein CyaY (104 aa).

Belongs to the frataxin family.

In terms of biological role, involved in iron-sulfur (Fe-S) cluster assembly. May act as a regulator of Fe-S biogenesis. The sequence is that of Iron-sulfur cluster assembly protein CyaY from Vibrio parahaemolyticus serotype O3:K6 (strain RIMD 2210633).